The following is an 833-amino-acid chain: EF-hand domain-containing family member B (833 aa).

2 consecutive EF-hand domains span residues glutamine 561 to serine 596 and leucine 597 to methionine 632. Aspartate 574, aspartate 578, methionine 580, glutamate 585, aspartate 610, aspartate 612, aspartate 614, and glutamate 621 together coordinate Ca(2+).

Microtubule inner protein component of sperm flagellar doublet microtubules. Interacts with STIM1 and ORAI1; the interactions take place upon Ca(2+)-store depletion and dissociate through a Ca(2+)-dependent mechanism. Interaction with STIM1 inhibits STIM1 interaction with SARAF. Expressed in airway epithelial cells.

It localises to the cytoplasm. It is found in the cytoskeleton. The protein localises to the cilium axoneme. The protein resides in the flagellum axoneme. Microtubule inner protein (MIP) part of the dynein-decorated doublet microtubules (DMTs) in cilia axoneme, which is required for motile cilia beating. Cytosolic sensor for calcium, modulates the interaction of STIM1 and ORAI1 upon store depletion and the activation of store-operated Ca(2+) entry (SOCE) and NFAT translocation from cytosol to nucleus. The polypeptide is EF-hand domain-containing family member B (Homo sapiens (Human)).